The primary structure comprises 101 residues: Small ribosomal subunit protein uS14 (101 aa).

It belongs to the universal ribosomal protein uS14 family. Part of the 30S ribosomal subunit. Contacts proteins S3 and S10.

Functionally, binds 16S rRNA, required for the assembly of 30S particles and may also be responsible for determining the conformation of the 16S rRNA at the A site. The sequence is that of Small ribosomal subunit protein uS14 from Burkholderia ambifaria (strain MC40-6).